The following is a 244-amino-acid chain: Protein YIPF4 (244 aa).

Residues 1–113 (MQPPGPPPAY…FNRQVVRDNP (113 aa)) lie on the Cytoplasmic side of the membrane. Residues 114-134 (DFWGPLAVVLFFSMISLYGQF) traverse the membrane as a helical segment. The Extracellular portion of the chain corresponds to 135-138 (RVVS). Residues 139-159 (WIITIWIFGSLTIFLLARVLG) traverse the membrane as a helical segment. At 160–166 (GEVAYGQ) the chain is on the cytoplasmic side. The chain crosses the membrane as a helical span at residues 167 to 187 (VLGVIGYSLLPLIVIAPVLLV). Over 188–195 (VGSFEVVS) the chain is Extracellular. A helical transmembrane segment spans residues 196–216 (TLIKLFGVFWAAYSAASLLVG). Topologically, residues 217–223 (EEFKTKK) are cytoplasmic. Residues 224-244 (PLLIYPIFLLYIYFLSLYTGV) traverse the membrane as a helical segment.

The protein belongs to the YIP1 family. Interacts with YIPF3 and YIPF5. As to quaternary structure, (Microbial infection) Interacts with human papillomavirus (HPV) E5 proteins. Expressed in keratinocytes (at protein level).

It is found in the golgi apparatus. The protein resides in the cis-Golgi network membrane. Involved in the maintenance of the Golgi structure. This is Protein YIPF4 (YIPF4) from Homo sapiens (Human).